Here is a 1205-residue protein sequence, read N- to C-terminus: Bromodomain and PHD finger-containing protein 3 (1205 aa).

2 disordered regions span residues 1-27 and 75-121; these read MRKP…KCSP and NSNK…SFRM. The residue at position 17 (Ser17) is a Phosphoserine. Over residues 75–84 the composition is skewed to polar residues; that stretch reads NSNKENSEQP. The span at 89–99 shows a compositional bias: basic residues; the sequence is KSKKPSSKGKK. Residues 212 to 262 form a PHD-type 1 zinc finger; that stretch reads DAFCCVCLDDECHNSNVILFCDICNLAVHQECYGVPYIPEGQWLCRCCLQS. The C2HC pre-PHD-type zinc-finger motif lies at 266–299; that stretch reads PVDCILCPNKGGAFKQTSDGHWAHVVCAIWIPEV. The PHD-type 2 zinc finger occupies 323–387; sequence LTCYICKQKG…RKTAYCEAHS (65 aa). Residues 387–472 are disordered; it reads SPPGAATARR…AGQDTPSTLP (86 aa). Phosphoserine is present on residues Ser400 and Ser403. Over residues 417–432 the composition is skewed to acidic residues; it reads DGEEEEEEEVEEEEQE. The segment covering 444–456 has biased composition (basic residues); that stretch reads VPKKSKMSLKQKI. Lys447, Lys449, and Lys671 each carry N6-acetyllysine. Residues 589-693 form the Bromo domain; the sequence is LELMPFNVLL…DLGGAILRHA (105 aa). Phosphoserine is present on residues Ser713 and Ser740. A disordered region spans residues 779-897; it reads RQKLAQPPPP…LQLGNEPLQR (119 aa). Over residues 817–827 the composition is skewed to acidic residues; it reads LQEEPEDDGDR. Positions 839 to 851 are enriched in low complexity; the sequence is EPTGPAPSLSEQE. Residue Ser900 is modified to Phosphoserine. Disordered stretches follow at residues 907–926 and 931–1015; these read LSLM…VGRR and FKKA…SECS. Residues 942 to 955 show a composition bias toward basic and acidic residues; that stretch reads RSPDRVLENGEDHG. Residues Ser962 and Ser965 each carry the phosphoserine modification. Over residues 980-991 the composition is skewed to basic and acidic residues; sequence SCSESEGERSPQ. The PWWP domain occupies 1076-1159; it reads PLELVWAKCR…RDKVLPLGVE (84 aa).

In terms of assembly, component of some HBO1 complex composed of KAT7/HBO1, MEAF6, ING4 or ING5, and BRPF3. Component of the MOZ/MORF complex composed at least of ING5, KAT6A, KAT6B, MEAF6 and one of BRPF1, BRD1/BRPF2 and BRPF3. Interacts with KAT7/HBO1; the interaction is direct.

It is found in the nucleus. Its function is as follows. Scaffold subunit of various histone acetyltransferase (HAT) complexes, such as the MOZ/MORF and HBO1 complexes, which have a histone H3 acetyltransferase activity. Plays a role in DNA replication initiation by directing KAT7/HBO1 specificity towards histone H3 'Lys-14' acetylation (H3K14ac), thereby facilitating the activation of replication origins. Component of the MOZ/MORF complex which has a histone H3 acetyltransferase activity. This chain is Bromodomain and PHD finger-containing protein 3, found in Homo sapiens (Human).